The following is a 328-amino-acid chain: tRNA N6-adenosine threonylcarbamoyltransferase (328 aa).

His111 and His115 together coordinate Fe cation. Substrate contacts are provided by residues 133–137, Asp166, Gly179, Asp183, and Asn270; that span reads LVSGG. Asp296 contributes to the Fe cation binding site.

Belongs to the KAE1 / TsaD family. Requires Fe(2+) as cofactor.

It is found in the cytoplasm. It carries out the reaction L-threonylcarbamoyladenylate + adenosine(37) in tRNA = N(6)-L-threonylcarbamoyladenosine(37) in tRNA + AMP + H(+). Its function is as follows. Required for the formation of a threonylcarbamoyl group on adenosine at position 37 (t(6)A37) in tRNAs that read codons beginning with adenine. Is involved in the transfer of the threonylcarbamoyl moiety of threonylcarbamoyl-AMP (TC-AMP) to the N6 group of A37, together with TsaE and TsaB. TsaD likely plays a direct catalytic role in this reaction. This Phytoplasma australiense protein is tRNA N6-adenosine threonylcarbamoyltransferase.